Here is a 457-residue protein sequence, read N- to C-terminus: MHILKVGFNYKTTPVDIREKFTFSEDSLQDAMVELKNQKSILEDVIISTCNRTEIYAVVDQLHTGRYYIKQFLSNWFGIEKEEFSTYLRITEDDGAMEHLFRVSTGLDSMVLGETQILGQVKQAFLNSQQVNTTGTIFNELFKQAITFGKRAHKETAIGEHAVSISYAAVELAKKIFGDLQEKHVAILGAGKMGELAAKNIQGSGATKITVVNRTLENANEMAEKFNADVESIDQLPVILQQADILISSTGADSIVVTKEMMEKVQKQRKGRALFLVDIAVPRDMDPAISELENVFLYDIDNLQHIVDDNLESRKQAAEKIELLIEEEIVTFKEWLKTLGVIPVISALRQKALTIQAETMQSIERKIPNLTDRERKVLNKHTKSIINQLLKEPVTQAKEFAGKDNAEDSLQLFINIFGIEEEVKEELVKHAKKNETLMKIAKEEPSSFPIIEKITTA.

Residues Thr49 to Arg52, Ser109, Glu114 to Gln116, and Gln120 each bind substrate. Residue Cys50 is the Nucleophile of the active site. Position 189 to 194 (Gly189 to Gly194) interacts with NADP(+).

Belongs to the glutamyl-tRNA reductase family. As to quaternary structure, homodimer.

It carries out the reaction (S)-4-amino-5-oxopentanoate + tRNA(Glu) + NADP(+) = L-glutamyl-tRNA(Glu) + NADPH + H(+). Its pathway is porphyrin-containing compound metabolism; protoporphyrin-IX biosynthesis; 5-aminolevulinate from L-glutamyl-tRNA(Glu): step 1/2. Functionally, catalyzes the NADPH-dependent reduction of glutamyl-tRNA(Glu) to glutamate 1-semialdehyde (GSA). The sequence is that of Glutamyl-tRNA reductase from Oceanobacillus iheyensis (strain DSM 14371 / CIP 107618 / JCM 11309 / KCTC 3954 / HTE831).